The chain runs to 429 residues: Adenylosuccinate synthetase (429 aa).

GTP-binding positions include 12-18 and 40-42; these read GDEGKGK and GHT. Aspartate 13 acts as the Proton acceptor in catalysis. The Mg(2+) site is built by aspartate 13 and glycine 40. Residues 13–16, 38–41, threonine 129, arginine 143, glutamine 223, threonine 238, and arginine 302 contribute to the IMP site; these read DEGK and NAGH. The Proton donor role is filled by histidine 41. 298-304 lines the substrate pocket; sequence VVTGRKR. GTP contacts are provided by residues arginine 304, 330–332, and 412–414; these read KLD and STS.

The protein belongs to the adenylosuccinate synthetase family. In terms of assembly, homodimer. Mg(2+) is required as a cofactor.

The protein resides in the cytoplasm. It carries out the reaction IMP + L-aspartate + GTP = N(6)-(1,2-dicarboxyethyl)-AMP + GDP + phosphate + 2 H(+). Its pathway is purine metabolism; AMP biosynthesis via de novo pathway; AMP from IMP: step 1/2. Functionally, plays an important role in the de novo pathway of purine nucleotide biosynthesis. Catalyzes the first committed step in the biosynthesis of AMP from IMP. This is Adenylosuccinate synthetase from Brucella suis (strain ATCC 23445 / NCTC 10510).